The following is a 458-amino-acid chain: Nuclear transcription factor Y subunit gamma (458 aa).

Over residues 305–315 (QQQFSQFTDGQ) the composition is skewed to low complexity. The disordered stretch occupies residues 305-379 (QQQFSQFTDG…QQSSTSPPPS (75 aa)). Residues 339 to 351 (TGNSTPCTSSLPT) show a composition bias toward polar residues.

Belongs to the NFYC/HAP5 subunit family. Heterotrimeric transcription factor composed of three components, NF-YA, NF-YB and NF-YC. NF-YB and NF-YC must interact and dimerize for NF-YA association and DNA binding.

The protein resides in the nucleus. Its function is as follows. Component of the sequence-specific heterotrimeric transcription factor (NF-Y) which specifically recognizes a 5'-CCAAT-3' box motif found in the promoters of its target genes. NF-Y can function as both an activator and a repressor, depending on its interacting cofactors. The protein is Nuclear transcription factor Y subunit gamma (NFYC) of Homo sapiens (Human).